The sequence spans 386 residues: Bifunctional desaturase/conjugase FADX (386 aa).

Residues 1–28 (MGAGGRMSVAPNNSKCEKKESRSVKRVP) are disordered. The next 2 membrane-spanning stretches (helical) occupy residues 65-85 (LSFI…SPIT) and 87-107 (IAWP…WVLG). The short motif at 108-112 (HECGH) is the Histidine box-1 element. Positions 144–148 (HRRHH) match the Histidine box-2 motif. The next 3 helical transmembrane spans lie at 182-202 (ALTL…FNVS), 228-248 (IYIS…IAMA), and 250-270 (GLAW…ALVV). Residues 318-322 (HVIHH) carry the Histidine box-3 motif.

Belongs to the fatty acid desaturase type 1 family. In terms of tissue distribution, expressed exclusively in developing seeds.

It is found in the endoplasmic reticulum membrane. The enzyme catalyses a (9Z,12Z)-octadecadienoyl-containing glycerolipid + 2 Fe(II)-[cytochrome b5] + O2 + 2 H(+) = a (9Z,11E,13E)-octadecatrienoyl-containing glycerolipid + 2 Fe(III)-[cytochrome b5] + 2 H2O. The catalysed reaction is (9Z,12Z,15Z)-octadecatrienoyl-containing glycerolipid + 2 Fe(II)-[cytochrome b5] + O2 + 2 H(+) = a (9Z,11E,13E,15Z)-octadecatetraenoyl-containing glycerolipid + 2 Fe(III)-[cytochrome b5] + 2 H2O. It carries out the reaction a (9Z)-octadecenoyl-containing glycerolipid + 2 Fe(II)-[cytochrome b5] + O2 + 2 H(+) = a (9Z,12E)-octadecadienoyl-containing glycerolipid + 2 Fe(III)-[cytochrome b5] + 2 H2O. It catalyses the reaction a (9Z)-hexadecenoyl-containing glycerolipid + 2 Fe(II)-[cytochrome b5] + O2 + 2 H(+) = a (9Z,12E)-hexadecadienoyl-containing glycerolipid + 2 Fe(III)-[cytochrome b5] + 2 H2O. Its pathway is lipid metabolism; polyunsaturated fatty acid biosynthesis. Functionally, converts linoleic acid to alpha-eleostearic acid (18:3(9Z,11E,13E)) and alpha-linolenic acid to alpha-parinaric acid (18:4(9Z,11E,13E,15Z)). Converts a single cis double bond at carbon 12 to two conjugated trans bonds at positions 11 and 13. Can also act as a 12(E) desaturase when acting on the monounsaturated fatty acids oleate and palmitoleate, stereoselectively introducing a trans double bond. This Vernicia fordii (Tung) protein is Bifunctional desaturase/conjugase FADX.